The following is a 400-amino-acid chain: Nicotinate phosphoribosyltransferase (400 aa).

His-220 is modified (phosphohistidine; by autocatalysis).

It belongs to the NAPRTase family. Post-translationally, transiently phosphorylated on a His residue during the reaction cycle. Phosphorylation strongly increases the affinity for substrates and increases the rate of nicotinate D-ribonucleotide production. Dephosphorylation regenerates the low-affinity form of the enzyme, leading to product release.

It catalyses the reaction nicotinate + 5-phospho-alpha-D-ribose 1-diphosphate + ATP + H2O = nicotinate beta-D-ribonucleotide + ADP + phosphate + diphosphate. The protein operates within cofactor biosynthesis; NAD(+) biosynthesis; nicotinate D-ribonucleotide from nicotinate: step 1/1. Catalyzes the synthesis of beta-nicotinate D-ribonucleotide from nicotinate and 5-phospho-D-ribose 1-phosphate at the expense of ATP. This chain is Nicotinate phosphoribosyltransferase, found in Shigella sonnei (strain Ss046).